The following is a 671-amino-acid chain: Nucleolar GTP-binding protein 1 (671 aa).

The region spanning 169–350 is the OBG-type G domain; it reads RTVLICGYPN…VKNAACERLL (182 aa). GTP is bound by residues 175–182, 221–225, and 289–292; these read GYPNVGKS, DTPGI, and NKTD. Residues 516 to 671 are disordered; that stretch reads VAQNRSTVPR…KRGKGKTDRR (156 aa). Positions 595–605 are enriched in polar residues; that stretch reads RAMSISRSQSR. Basic residues-rich tracts occupy residues 631-640 and 654-671; these read NKSHKKRDKN and RPKH…TDRR.

It belongs to the TRAFAC class OBG-HflX-like GTPase superfamily. OBG GTPase family. NOG subfamily.

The protein resides in the nucleus. Its subcellular location is the nucleolus. Involved in the biogenesis of the 60S ribosomal subunit. This is Nucleolar GTP-binding protein 1 from Arabidopsis thaliana (Mouse-ear cress).